Here is a 1480-residue protein sequence, read N- to C-terminus: Cystic fibrosis transmembrane conductance regulator (1480 aa).

Over 1–77 (MQRSPLEKAS…KLINALRRCF (77 aa)) the chain is Cytoplasmic. Residues 78–98 (FWRFMFYGIFLYLGEVTKAVQ) traverse the membrane as a helical segment. The 285-residue stretch at 81-365 (FMFYGIFLYL…WAVQTWYDSL (285 aa)) folds into the ABC transmembrane type-1 1 domain. The Extracellular segment spans residues 99–122 (PLLLGRIIASYDPDNKEERSIAIY). Residues 123 to 146 (LGIGLCLLFIVRTLLLHPAIFGLH) form a helical membrane-spanning segment. Topologically, residues 147–195 (HIGMQMRIAMFSLIYKKTLKLSSRVLDKISIGQLVSLLSNNLNKFDEGL) are cytoplasmic. Residues 196 to 216 (ALAHFVWIAPLQVALLMGLIW) traverse the membrane as a helical segment. The Extracellular portion of the chain corresponds to 217-222 (ELLQAS). A helical transmembrane segment spans residues 223–243 (AFCGLGFLIVLALFQAGLGRM). Topologically, residues 244–298 (MMKYRDQRAGKINERLVITSEMIENIQSVKAYCWEEAMEKMIENLRQTELKLTRK) are cytoplasmic. The helical transmembrane segment at 299–319 (AAYVRYFNSSAFFFSGFFVVF) threads the bilayer. The Extracellular portion of the chain corresponds to 320–339 (LSVLPYALIKGIVLRKIFTT). A helical membrane pass occupies residues 340 to 358 (ISFCIVLRMAVTRQFPWAV). The Cytoplasmic segment spans residues 359-858 (QTWYDSLGAI…YLRYITVHKS (500 aa)). ATP-binding positions include Trp-401, Ser-434, 458–465 (GSTGAGKT), and Gln-493. An ABC transporter 1 domain is found at 423–646 (NGDDSLFFSN…RPDFSSKLMG (224 aa)). The S-palmitoyl cysteine moiety is linked to residue Cys-524. Ser-549 and Ser-660 each carry phosphoserine. A disordered R region region spans residues 654-831 (SAERRNSILT…EEINEEDLKE (178 aa)). Ser-670 bears the Phosphoserine; by PKA mark. Lys-688 is covalently cross-linked (Glycyl lysine isopeptide (Lys-Gly) (interchain with G-Cter in ubiquitin)). Phosphoserine is present on residues Ser-700 and Ser-712. Thr-717 is modified (phosphothreonine). Phosphoserine is present on residues Ser-737, Ser-753, Ser-768, Ser-790, Ser-795, and Ser-813. The helical transmembrane segment at 859-879 (LIFVLIWCLVIFLAEVAASLV) threads the bilayer. In terms of domain architecture, ABC transmembrane type-1 2 spans 859–1155 (LIFVLIWCLV…AVNSSIDVDS (297 aa)). The Extracellular segment spans residues 880–918 (VLWLLGNTPLQDKGNSTHSRNNSYAVIITSTSSYYVFYI). N-linked (GlcNAc...) asparagine glycans are attached at residues Asn-894 and Asn-900. A discontinuously helical transmembrane segment spans residues 919-939 (YVGVADTLLAMGFFRGLPLVH). Residues 940–990 (TLITVSKILHNKMLHSVLQAPMSTLNTLKAGGILNRFSKDIAILDDLLPLT) lie on the Cytoplasmic side of the membrane. The chain crosses the membrane as a helical span at residues 991-1011 (IFDFIQLLLIVIGAIAVVAVL). The Extracellular segment spans residues 1012–1013 (QP). A helical membrane pass occupies residues 1014–1034 (YIFVATVPVIVAFIMLRAYFL). The Cytoplasmic segment spans residues 1035–1095 (QTSQQLKQLE…TANWFLYLST (61 aa)). The chain crosses the membrane as a helical span at residues 1096–1116 (LRWFQMRIEMIFVIFFIAVTF). Residues 1117–1130 (ISILTTGEGEGRVG) lie on the Extracellular side of the membrane. Residues 1131 to 1151 (IILTLAMNIMSTLQWAVNSSI) form a helical membrane-spanning segment. Residues 1152-1480 (DVDSLMRSVS…TEEEVQDTRL (329 aa)) lie on the Cytoplasmic side of the membrane. Residues 1210–1443 (MTVKDLTAKY…RSLFQQAISP (234 aa)) form the ABC transporter 2 domain. ATP contacts are provided by residues Tyr-1219 and 1244–1251 (GRTGSGKS). The tract at residues 1386-1480 (RTLKQAFADC…TEEEVQDTRL (95 aa)) is interaction with GORASP2. Cys-1395 is lipidated: S-palmitoyl cysteine. Residues Ser-1444 and Ser-1456 each carry the phosphoserine modification. Residues 1452 to 1480 (HRNSSKCKSKPQIAALKEETEEEVQDTRL) are disordered. Positions 1470 to 1480 (ETEEEVQDTRL) are enriched in acidic residues. Positions 1478–1480 (TRL) match the PDZ-binding motif.

Belongs to the ABC transporter superfamily. ABCC family. CFTR transporter (TC 3.A.1.202) subfamily. As to quaternary structure, monomer; does not require oligomerization for channel activity. May form oligomers in the membrane. Interacts with SLC26A3, SLC26A6 and NHERF1. Interacts with SHANK2. Interacts with MYO6. Interacts (via C-terminus) with GOPC (via PDZ domain); this promotes CFTR internalization and thereby decreases channel activity. Interacts with SLC4A7 through NHERF1. Found in a complex with MYO5B and RAB11A. Interacts with ANO1. Interacts with SLC26A8. Interacts with AHCYL1; the interaction increases CFTR activity. Interacts with CSE1L. The core-glycosylated form interacts with GORASP2 (via PDZ GRASP-type 1 domain) in respone to ER stress. Interacts with MARCHF2; the interaction leads to CFTR ubiqtuitination and degradation. Interacts with ADGRG2. Post-translationally, N-glycosylated. In terms of processing, phosphorylated; cAMP treatment promotes phosphorylation and activates the channel. Dephosphorylation decreases the ATPase activity (in vitro). Phosphorylation at PKA sites activates the channel. Phosphorylation at PKC sites enhances the response to phosphorylation by PKA. Phosphorylated by AMPK; this inhibits channel activity. Ubiquitinated, leading to its degradation in the lysosome. Deubiquitination by USP10 in early endosomes enhances its endocytic recycling to the cell membrane. Ubiquitinated by RNF185 during ER stress. Ubiquitinated by MARCHF2.

It localises to the apical cell membrane. Its subcellular location is the early endosome membrane. The protein localises to the cell membrane. It is found in the recycling endosome membrane. The protein resides in the endoplasmic reticulum membrane. It localises to the nucleus. It catalyses the reaction ATP + H2O + closed Cl(-) channel = ADP + phosphate + open Cl(-) channel.. The enzyme catalyses chloride(in) = chloride(out). The catalysed reaction is hydrogencarbonate(in) = hydrogencarbonate(out). It carries out the reaction ATP + H2O = ADP + phosphate + H(+). Epithelial ion channel that plays an important role in the regulation of epithelial ion and water transport and fluid homeostasis. Mediates the transport of chloride ions across the cell membrane. Possesses an intrinsic ATPase activity and utilizes ATP to gate its channel; the passive flow of anions through the channel is gated by cycles of ATP binding and hydrolysis by the ATP-binding domains. The ion channel is also permeable to HCO(3)(-); selectivity depends on the extracellular chloride concentration. Exerts its function also by modulating the activity of other ion channels and transporters. Contributes to the regulation of the pH and the ion content of the epithelial fluid layer. Modulates the activity of the epithelial sodium channel (ENaC) complex, in part by regulating the cell surface expression of the ENaC complex. May regulate bicarbonate secretion and salvage in epithelial cells by regulating the transporter SLC4A7. Can inhibit the chloride channel activity of ANO1. Plays a role in the chloride and bicarbonate homeostasis during sperm epididymal maturation and capacitation. The chain is Cystic fibrosis transmembrane conductance regulator from Pongo abelii (Sumatran orangutan).